We begin with the raw amino-acid sequence, 485 residues long: Glutamyl-tRNA(Gln) amidotransferase subunit A (485 aa).

Catalysis depends on charge relay system residues Lys-78 and Ser-153. Ser-177 serves as the catalytic Acyl-ester intermediate.

It belongs to the amidase family. GatA subfamily. In terms of assembly, heterotrimer of A, B and C subunits.

The catalysed reaction is L-glutamyl-tRNA(Gln) + L-glutamine + ATP + H2O = L-glutaminyl-tRNA(Gln) + L-glutamate + ADP + phosphate + H(+). In terms of biological role, allows the formation of correctly charged Gln-tRNA(Gln) through the transamidation of misacylated Glu-tRNA(Gln) in organisms which lack glutaminyl-tRNA synthetase. The reaction takes place in the presence of glutamine and ATP through an activated gamma-phospho-Glu-tRNA(Gln). In Bacillus mycoides (strain KBAB4) (Bacillus weihenstephanensis), this protein is Glutamyl-tRNA(Gln) amidotransferase subunit A.